The primary structure comprises 422 residues: Histidinol dehydrogenase (422 aa).

NAD(+) is bound by residues Tyr123, Gln183, and Asn206. Positions 229, 251, and 254 each coordinate substrate. Residues Gln251 and His254 each contribute to the Zn(2+) site. Residues Glu320 and His321 each act as proton acceptor in the active site. His321, Asp354, Glu408, and His413 together coordinate substrate. Asp354 provides a ligand contact to Zn(2+). His413 serves as a coordination point for Zn(2+).

It belongs to the histidinol dehydrogenase family. The cofactor is Zn(2+).

It catalyses the reaction L-histidinol + 2 NAD(+) + H2O = L-histidine + 2 NADH + 3 H(+). It functions in the pathway amino-acid biosynthesis; L-histidine biosynthesis; L-histidine from 5-phospho-alpha-D-ribose 1-diphosphate: step 9/9. In terms of biological role, catalyzes the sequential NAD-dependent oxidations of L-histidinol to L-histidinaldehyde and then to L-histidine. In Natronomonas pharaonis (strain ATCC 35678 / DSM 2160 / CIP 103997 / JCM 8858 / NBRC 14720 / NCIMB 2260 / Gabara) (Halobacterium pharaonis), this protein is Histidinol dehydrogenase.